The primary structure comprises 500 residues: MSNMQQKTDVILIGAGIMSATLGSLLKELAPEWEIKVFEKLASAGEESSNEWNNAGTGHSALCELNYTSEKSDGSIDISKAVKVNEQFQLSRQFWAYLVKSKLIRNPQDFIMPLPHMSLVQGEKNVQFLKNRFEALSKNPLFQGMEFSDSPETLKKWLPLIMEGRTSNEPMAATKIDSGTDVNFGALTRMLFDYLKTKNVELNYKHSVENIKRTKNGLWEVKVHDMNSGKIEHHTAKFVFIGGGGGSLPLLQKTGIPESKHIGGFPVSGLFMVCKNQKVVEQHHAKVYGKAKVGAPPMSVPHLDTRYIDNKKALLFGPFAGFSPKFLKTGSNLDLIGSVKPNNVLTMLAAGVKEMGLTKYLIQQVMLSHEKRMEELREFIPNAKSEDWDIVVAGQRVQVIKDTDAGGKGTLQFGTEVVSAADGSIAALLGASPGASTAVHVMLEVLEKCFPSRMVEWEGKIKEMIPSYGISLTENPRLFQDLHTSTGRTLGLNEKETVHN.

It belongs to the MQO family. FAD serves as cofactor.

It carries out the reaction (S)-malate + a quinone = a quinol + oxaloacetate. Its pathway is carbohydrate metabolism; tricarboxylic acid cycle; oxaloacetate from (S)-malate (quinone route): step 1/1. The chain is Probable malate:quinone oxidoreductase from Bacillus cereus (strain AH187).